Reading from the N-terminus, the 1252-residue chain is Guanine nucleotide exchange factor SDC25 (1252 aa).

An SH3 domain is found at 26–97 (QPIDVVECTY…PPSFTRSILN (72 aa)). 2 disordered regions span residues 409 to 454 (IPAS…DTIW) and 623 to 648 (LNLD…DEYE). The segment covering 416–428 (TSCSSETSHHSPS) has biased composition (low complexity). Residues 782–914 (SNNRIKGGSK…LLKEVNQKFK (133 aa)) enclose the N-terminal Ras-GEF domain. Residues 952-1199 (DPVLFATQLT…YQLSLIIEPK (248 aa)) form the Ras-GEF domain. Residues 1201 to 1252 (RKKVVPNSNSNNKSQEKSRDDQTDEGKTSTKKDRFSKFQLHKTKKKAPKVSK) form a disordered region. The segment covering 1214 to 1236 (SQEKSRDDQTDEGKTSTKKDRFS) has biased composition (basic and acidic residues). Over residues 1239 to 1252 (QLHKTKKKAPKVSK) the composition is skewed to basic residues.

Functionally, promotes the exchange of Ras-bound GDP by GTP. This Saccharomyces cerevisiae (strain YJM789) (Baker's yeast) protein is Guanine nucleotide exchange factor SDC25 (SDC25).